A 100-amino-acid chain; its full sequence is Small ribosomal subunit protein uS14c (100 aa).

The protein belongs to the universal ribosomal protein uS14 family. Part of the 30S ribosomal subunit.

Its subcellular location is the plastid. It localises to the chloroplast. Binds 16S rRNA, required for the assembly of 30S particles. This Barbarea verna (Land cress) protein is Small ribosomal subunit protein uS14c.